The following is a 563-amino-acid chain: Arginine--tRNA ligase (563 aa).

Positions 121 to 131 (PNIAKPFSIGH) match the 'HIGH' region motif.

It belongs to the class-I aminoacyl-tRNA synthetase family. As to quaternary structure, monomer.

The protein localises to the cytoplasm. The catalysed reaction is tRNA(Arg) + L-arginine + ATP = L-arginyl-tRNA(Arg) + AMP + diphosphate. This Streptococcus pneumoniae (strain Hungary19A-6) protein is Arginine--tRNA ligase.